We begin with the raw amino-acid sequence, 900 residues long: DNA mismatch repair protein MutS (900 aa).

637–644 (GPNMAGKS) contacts ATP.

Belongs to the DNA mismatch repair MutS family.

Its function is as follows. This protein is involved in the repair of mismatches in DNA. It is possible that it carries out the mismatch recognition step. This protein has a weak ATPase activity. The protein is DNA mismatch repair protein MutS of Methanosarcina barkeri (strain Fusaro / DSM 804).